A 253-amino-acid polypeptide reads, in one-letter code: Oxidoreductase AOL_s00215g277 (253 aa).

Residues 181 to 203 (FFGYWLTVILGYYIGSLLGYQPF) traverse the membrane as a helical segment.

This sequence belongs to the oxidoreductase OpS7 family.

It localises to the membrane. Its pathway is secondary metabolite biosynthesis; terpenoid biosynthesis. Oxidoreductase; part of the gene cluster that mediates the biosynthesis of sesquiterpenyl epoxy-cyclohexenoids (SECs) such as anthrobotrisins and arthrosporols, metabolites that possess a novel hybrid carbon skeleton consisting of a polyketide-derived epoxycyclohexenol combined with a terpenoid-derived monocyclic sesquiterpenol substructure (PKS-PTS hybrid). The SEC pathway plays an important role for fungal soil colonization via decreasing fungal nematode-capturing ability. Within the pathway, the oxidoreductase AOL_s00215g277 seems to play a role in the farnesylation step of toluquinol to produce farnesyl hydroquinone, the hybrid precursor for biosynthesis of SECs. The pathway begins with the biosynthesis of 6-methylsalicylic acid (6-MSA), the first precursor of the polyketide-derived epoxycyclohexenol in arthrosporols, by the polyketide synthase (PKS) AOL_s00215g283 via condensation of 1 acetate and 3 malonate units. The 6-methylsalicylic acid decarboxylase AOL_s00215g281 then catalyzes the decarboxylation of 6-methylsalicylic acid to yield m-cresol. The cytochrome P450 monooxygenase AOL_s00215g282 further oxidizes m-cresol to yield toluquinol. With the assistance of the oxidoreductase AOL_s00215g277, the polyprenyl transferase AOL_s00215g276 catalyzes the farnesylation of toluquinol to produce farnesyl hydroquinone, the hybrid precursor for biosynthesis of SECs. Farnesyl hydroquinone undergoes epoxidation and then subsequent dehydrogenation to form farnesyl epoxy-quinone, the first and simplest SEC. The cytochrome P450 monooxygenase AOL_s00215g278 and the FAD-dependent monooxygenase AOL_s00215g279 might be involved in the oxygenation of the phenol moiety, most likely in the epoxy formation. The cytochrome P450 monooxygenases AOL_s00215g274 and AOL_s00215g280 are involved in specific regional ketone reductions at respectively C-4 and C-1 of farnesyl epoxy-quinone PubMed:33823587. This is Oxidoreductase AOL_s00215g277 from Arthrobotrys oligospora (strain ATCC 24927 / CBS 115.81 / DSM 1491) (Nematode-trapping fungus).